Consider the following 128-residue polypeptide: DELTA-urthionin-Uf1a (128 aa).

The N-terminal stretch at 1-24 (MEGKTVIVSLLLLSIVVGQIQVEA) is a signal peptide. Disulfide bonds link Cys-27–Cys-64, Cys-28–Cys-56, and Cys-40–Cys-50. Residues 67 to 128 (LSIPEVTGEA…LCTKNSIETA (62 aa)) constitute a propeptide, acidic domain.

The protein belongs to the plant thionin (TC 1.C.44) family. In terms of tissue distribution, expressed in trichomes, that are stiff epidermal hairs located on the surface of petioles and leaves.

It is found in the secreted. Plant defense protein that causes pain by probable disruption of cell membranes. Shows cytotoxic activity against the neuroblastoma cell line SH-SY5Y and slightly weaker activity against several non-neuronal cell lines. In vivo, intraplantar injection into mice causes several nocifensive responses, along with swelling and redness. The chain is DELTA-urthionin-Uf1a from Urtica ferox (Tree nettle).